We begin with the raw amino-acid sequence, 100 residues long: MAKKSLIQREMKRRILNRKYSSLRKFLREKIDKVSSLDERWKIRKNLQSLPRNSAPSRQRRRCFITGRSRANYRDFGLSRHLLREMAHSCLLPGITKSSW.

It belongs to the universal ribosomal protein uS14 family. In terms of assembly, part of the 30S ribosomal subunit.

The protein localises to the plastid. Its function is as follows. Binds 16S rRNA, required for the assembly of 30S particles. The polypeptide is Small ribosomal subunit protein uS14c (Aneura mirabilis (Parasitic liverwort)).